A 298-amino-acid chain; its full sequence is Probable endonuclease 4 (298 aa).

Residues histidine 69, histidine 111, glutamate 146, aspartate 180, histidine 183, histidine 215, aspartate 228, histidine 230, and glutamate 260 each contribute to the Zn(2+) site.

The protein belongs to the AP endonuclease 2 family. Zn(2+) is required as a cofactor.

It carries out the reaction Endonucleolytic cleavage to 5'-phosphooligonucleotide end-products.. Functionally, endonuclease IV plays a role in DNA repair. It cleaves phosphodiester bonds at apurinic or apyrimidinic (AP) sites, generating a 3'-hydroxyl group and a 5'-terminal sugar phosphate. This Bacillus mycoides (strain KBAB4) (Bacillus weihenstephanensis) protein is Probable endonuclease 4.